An 847-amino-acid polypeptide reads, in one-letter code: Endo-beta-N-acetylglucosaminidase EndoSd (847 aa).

The signal sequence occupies residues 1 to 36 (MDKRLLVKRTLGCVCAATLMGAILATHHDSLISVKA). The region spanning 65 to 377 (PLYAGYFRTW…HPVVDNISHT (313 aa)) is the GH18 domain. His107 is an a glycoprotein binding site. Catalysis depends on Glu186, which acts as the Proton donor. A glycoprotein is bound by residues Glu188, Gln250, Tyr252, Glu288, Glu289, Asn295, and Tyr339. LRR repeat units lie at residues 423-446 (LERY…LEKL), 447-470 (SHLQ…ILPE), 483-506 (MTGL…DVNG), and 507-530 (LTHL…ADRK). A carbohydrate-binding module (CBM) region spans residues 683 to 836 (MENLAKGAKV…YTELQILGQR (154 aa)). Residues Lys704, Asp707, and Glu829 each contribute to the Ca(2+) site.

Belongs to the glycosyl hydrolase 18 family.

It localises to the secreted. The protein resides in the host extracellular space. The enzyme catalyses an N(4)-(oligosaccharide-(1-&gt;3)-[oligosaccharide-(1-&gt;6)]-beta-D-Man-(1-&gt;4)-beta-D-GlcNAc-(1-&gt;4)-alpha-D-GlcNAc)-L-asparaginyl-[protein] + H2O = an oligosaccharide-(1-&gt;3)-[oligosaccharide-(1-&gt;6)]-beta-D-Man-(1-&gt;4)-D-GlcNAc + N(4)-(N-acetyl-beta-D-glucosaminyl)-L-asparaginyl-[protein]. Endoglucosidase that acts as a host immune evasion factor by mediating hydrolysis of the N-linked glycan from the Fc region of host immunoglobulin-gamma (IgG) during infection. Specifically catalyzes the hydrolysis of the beta-1,4 linkage between the first two N-acetylglucosamine residues of the complex-type N-linked glycan located on 'Asn-297' of the Fc region of IgG antibodies (IGHG1, IGHG2, IGHG3 or IGHG4), thereby preventing interaction between IgGs and Fc receptors and ability to activate the complement pathway. Shows a specificity for biantennary complex type N-glycans; does neither cleave larger complex type glycans nor oligomannose and nor hybrid-type glycans. Specifically acts on IgGs; does not act on immunoglobulin alpha, beta, delta or mu. The polypeptide is Endo-beta-N-acetylglucosaminidase EndoSd (Streptococcus dysgalactiae).